The sequence spans 382 residues: 1-deoxy-D-xylulose 5-phosphate reductoisomerase (382 aa).

The NADPH site is built by threonine 10, glycine 11, serine 12, isoleucine 13, glycine 36, lysine 37, asparagine 38, and asparagine 121. Lysine 122 is a binding site for 1-deoxy-D-xylulose 5-phosphate. Glutamate 123 contributes to the NADPH binding site. Mn(2+) is bound at residue aspartate 147. The 1-deoxy-D-xylulose 5-phosphate site is built by serine 148, glutamate 149, serine 173, and histidine 196. Residue glutamate 149 participates in Mn(2+) binding. Glycine 202 is a binding site for NADPH. Serine 209, asparagine 214, lysine 215, and glutamate 218 together coordinate 1-deoxy-D-xylulose 5-phosphate. Position 218 (glutamate 218) interacts with Mn(2+).

This sequence belongs to the DXR family. Mg(2+) serves as cofactor. The cofactor is Mn(2+).

The catalysed reaction is 2-C-methyl-D-erythritol 4-phosphate + NADP(+) = 1-deoxy-D-xylulose 5-phosphate + NADPH + H(+). It participates in isoprenoid biosynthesis; isopentenyl diphosphate biosynthesis via DXP pathway; isopentenyl diphosphate from 1-deoxy-D-xylulose 5-phosphate: step 1/6. Catalyzes the NADPH-dependent rearrangement and reduction of 1-deoxy-D-xylulose-5-phosphate (DXP) to 2-C-methyl-D-erythritol 4-phosphate (MEP). The sequence is that of 1-deoxy-D-xylulose 5-phosphate reductoisomerase from Halalkalibacterium halodurans (strain ATCC BAA-125 / DSM 18197 / FERM 7344 / JCM 9153 / C-125) (Bacillus halodurans).